A 396-amino-acid polypeptide reads, in one-letter code: Subtilisin-like protease 5 (396 aa).

Residues 1–20 form the signal peptide; sequence MTGFFTFLSFSLAALSVTNA. The propeptide occupies 21-116; sequence AHILSVPKGA…VEPDAIISQH (96 aa). One can recognise an Inhibitor I9 domain in the interval 37–113; the sequence is YIVVMKDDTS…VAFVEPDAII (77 aa). N-linked (GlcNAc...) asparagine glycosylation is present at Asn-63. Residues 125–396 form the Peptidase S8 domain; sequence PWGLSRLSNR…SRLLYNGSGR (272 aa). Active-site charge relay system residues include Asp-156 and His-187. Residues Asn-230 and Asn-248 are each glycosylated (N-linked (GlcNAc...) asparagine). The Charge relay system role is filled by Ser-342. Polar residues predominate over residues 376–389; that stretch reads PTIRNPGPDTTSRL. The segment at 376-396 is disordered; sequence PTIRNPGPDTTSRLLYNGSGR. Asn-392 carries N-linked (GlcNAc...) asparagine glycosylation.

It belongs to the peptidase S8 family.

It is found in the secreted. Secreted subtilisin-like serine protease with keratinolytic activity that contributes to pathogenicity. This Trichophyton tonsurans (Scalp ringworm fungus) protein is Subtilisin-like protease 5 (SUB5).